The sequence spans 589 residues: UvrABC system protein C (589 aa).

In terms of domain architecture, GIY-YIG spans P13–F90. In terms of domain architecture, UVR spans K194–T229.

This sequence belongs to the UvrC family. As to quaternary structure, interacts with UvrB in an incision complex.

The protein localises to the cytoplasm. In terms of biological role, the UvrABC repair system catalyzes the recognition and processing of DNA lesions. UvrC both incises the 5' and 3' sides of the lesion. The N-terminal half is responsible for the 3' incision and the C-terminal half is responsible for the 5' incision. The polypeptide is UvrABC system protein C (Aster yellows witches'-broom phytoplasma (strain AYWB)).